Reading from the N-terminus, the 373-residue chain is Queuine tRNA-ribosyltransferase (373 aa).

Aspartate 90 acts as the Proton acceptor in catalysis. Substrate is bound by residues 90–94 (DSGGF), aspartate 144, glutamine 193, and glycine 220. Positions 251–257 (GVGTPED) are RNA binding. The active-site Nucleophile is aspartate 270. The tract at residues 275–279 (TRNAR) is RNA binding; important for wobble base 34 recognition. Zn(2+) is bound by residues cysteine 308, cysteine 310, cysteine 313, and histidine 339.

Belongs to the queuine tRNA-ribosyltransferase family. Homodimer. Within each dimer, one monomer is responsible for RNA recognition and catalysis, while the other monomer binds to the replacement base PreQ1. Zn(2+) serves as cofactor.

It carries out the reaction 7-aminomethyl-7-carbaguanine + guanosine(34) in tRNA = 7-aminomethyl-7-carbaguanosine(34) in tRNA + guanine. It functions in the pathway tRNA modification; tRNA-queuosine biosynthesis. Catalyzes the base-exchange of a guanine (G) residue with the queuine precursor 7-aminomethyl-7-deazaguanine (PreQ1) at position 34 (anticodon wobble position) in tRNAs with GU(N) anticodons (tRNA-Asp, -Asn, -His and -Tyr). Catalysis occurs through a double-displacement mechanism. The nucleophile active site attacks the C1' of nucleotide 34 to detach the guanine base from the RNA, forming a covalent enzyme-RNA intermediate. The proton acceptor active site deprotonates the incoming PreQ1, allowing a nucleophilic attack on the C1' of the ribose to form the product. After dissociation, two additional enzymatic reactions on the tRNA convert PreQ1 to queuine (Q), resulting in the hypermodified nucleoside queuosine (7-(((4,5-cis-dihydroxy-2-cyclopenten-1-yl)amino)methyl)-7-deazaguanosine). This Campylobacter jejuni subsp. jejuni serotype O:6 (strain 81116 / NCTC 11828) protein is Queuine tRNA-ribosyltransferase.